Here is a 477-residue protein sequence, read N- to C-terminus: Transmembrane and coiled-coil domain protein 3 (477 aa).

Phosphoserine is present on Ser46. Residues 112-153 (KQVFEKKNQKSAHSIAQLQKKLEQYHRKLREIEQNGASRSSK) are a coiled coil. Disordered stretches follow at residues 168-188 (KDAHVKSRTAPHCMESSKSGM) and 249-277 (PKYGSDDECSSGTSGSADSNGNQSFGAGG). The residue at position 253 (Ser253) is a Phosphoserine. Residues 258-273 (SSGTSGSADSNGNQSF) show a composition bias toward polar residues. Positions 282 to 398 (DSQGKLAVIL…KLELHQQEQQ (117 aa)) form a coiled coil. A run of 2 helical transmembrane segments spans residues 417–437 (VILAFMTVILVCVSTIAKFVS) and 450–470 (FFAVTLLAIFCKNWDHILCAI).

The protein belongs to the TEX28 family. May form homodimers and heterodimers with TMCC2 or TMCC3 via the coiled-coil domains. Interacts with ribosomal proteins RPL4 and RPS6. As to expression, widely expressed, with highest levels in brain, spinal cord and testis.

The protein resides in the endoplasmic reticulum membrane. In Homo sapiens (Human), this protein is Transmembrane and coiled-coil domain protein 3.